The sequence spans 886 residues: uncharacterized protein (886 aa).

Positions 1–20 (MKILKSLVLLVLFIVMPAKA) are cleaved as a signal peptide. The next 6 helical transmembrane spans lie at 520-540 (VIIF…IEVI), 563-583 (TYFF…VVGA), 609-629 (LLFI…IITI), 647-667 (IIAF…IILM), 680-700 (ISTL…FLLI), and 771-791 (FLVL…SYGL).

This sequence belongs to the TrbL/VirB6 family.

It localises to the cell membrane. This is an uncharacterized protein from Rickettsia typhi (strain ATCC VR-144 / Wilmington).